The primary structure comprises 897 residues: Protein transport protein SEC24-1 (897 aa).

Positions 213, 216, 235, and 238 each coordinate Zn(2+). The segment at 213–238 is zinc finger-like; sequence CRRCRSYINPFAKFIEQGRRWRCNFC.

Belongs to the SEC23/SEC24 family. SEC24 subfamily. As to quaternary structure, the COPII coat is composed of at least 5 proteins: the SEC23/24 complex, the SEC13/31 complex, and the protein SAR1. Golgi apparatus membrane; Peripheral membrane protein; Cytoplasmic side.

The protein localises to the cytoplasm. It is found in the cytoplasmic vesicle. Its subcellular location is the COPII-coated vesicle membrane. The protein resides in the endoplasmic reticulum membrane. It localises to the golgi apparatus membrane. Its function is as follows. Component of the coat protein complex II (COPII) which promotes the formation of transport vesicles from the endoplasmic reticulum (ER). The coat has two main functions, the physical deformation of the endoplasmic reticulum membrane into vesicles and the selection of cargo molecules. This chain is Protein transport protein SEC24-1 (SEC241), found in Candida glabrata (strain ATCC 2001 / BCRC 20586 / JCM 3761 / NBRC 0622 / NRRL Y-65 / CBS 138) (Yeast).